The primary structure comprises 137 residues: Nucleoside diphosphate kinase (137 aa).

Residues Lys-9, Phe-57, Arg-85, Thr-91, Arg-102, and Asn-112 each contribute to the ATP site. Residue His-115 is the Pros-phosphohistidine intermediate of the active site.

Belongs to the NDK family. As to quaternary structure, homotetramer. It depends on Mg(2+) as a cofactor.

Its subcellular location is the cytoplasm. The enzyme catalyses a 2'-deoxyribonucleoside 5'-diphosphate + ATP = a 2'-deoxyribonucleoside 5'-triphosphate + ADP. It carries out the reaction a ribonucleoside 5'-diphosphate + ATP = a ribonucleoside 5'-triphosphate + ADP. Major role in the synthesis of nucleoside triphosphates other than ATP. The ATP gamma phosphate is transferred to the NDP beta phosphate via a ping-pong mechanism, using a phosphorylated active-site intermediate. The protein is Nucleoside diphosphate kinase of Sulfurovum sp. (strain NBC37-1).